Reading from the N-terminus, the 185-residue chain is Translocon-associated protein subunit gamma (185 aa).

The residue at position 1 (methionine 1) is an N-acetylmethionine. Residues 1–27 (MAPKGSCKQQSEEDLLLQDFSRNLSAK) lie on the Lumenal side of the membrane. A Phosphoserine modification is found at serine 11. Residues 28 to 48 (SSALFFGNAFIVSAIPIWLYW) traverse the membrane as a helical segment. The Cytoplasmic portion of the chain corresponds to 49-54 (RIWHMD). Residues 55–76 (LIQSAVLYSVMTLVSTYLVAFA) traverse the membrane as a helical segment. Residues 77–135 (YKNVKFVLKHKVAQKREDAVSKEVTRKLSEADNRKMSRKEKDERILWKKNEVADYEATT) lie on the Lumenal side of the membrane. At serine 105 the chain carries Phosphoserine. Residues 136–157 (FSIFYNNTLFLVVVIVASFFIL) traverse the membrane as a helical segment. Residues 158-163 (KNFNPT) are Cytoplasmic-facing. A helical transmembrane segment spans residues 164-184 (VNYILSISASSGLIALLSTGS).

The protein belongs to the TRAP-gamma family. Heterotetramer of TRAP-alpha, TRAP-beta, TRAP-delta and TRAP-gamma.

The protein localises to the endoplasmic reticulum membrane. TRAP proteins are part of a complex whose function is to bind calcium to the ER membrane and thereby regulate the retention of ER resident proteins. The sequence is that of Translocon-associated protein subunit gamma (SSR3) from Pongo abelii (Sumatran orangutan).